Reading from the N-terminus, the 340-residue chain is MAVEMLYEADVKVAALDGKKIAVIGYGSQGHAHAQNLRDSGHDVIIGVRHGKSFDKAKEDGFDTYEVGEATKLADIIMVLAPDEIQKDIYKDEIAPNLSAGKALGFAHGFNIHFGYIKAPEDVDVFMVAPKGPGHLVRRTYTEGFGVPSLYAVYQNPTGNAENIALDWAKGIGSARVGLLVTTFKEETEEDLFGEQAVLMGGLTHLIEAGFEVLTEAGYAPQLAYFEVLHEMKLIVDLIYEGGFKKMRQSCSNTAEFGDFVTGPRVIGPEVKENMKAALADIQSGKFAREFVEDHDAGFPRLKAFRKEAEGLEIEKIGAELRKAMPFVNQNDDDAFKIYN.

The region spanning 3-182 is the KARI N-terminal Rossmann domain; that stretch reads VEMLYEADVK…GSARVGLLVT (180 aa). NADP(+) contacts are provided by residues 26–29, R49, S53, and 83–86; these read YGSQ and DEIQ. The active site involves H108. G134 serves as a coordination point for NADP(+). In terms of domain architecture, KARI C-terminal knotted spans 183 to 328; that stretch reads TFKEETEEDL…AELRKAMPFV (146 aa). 4 residues coordinate Mg(2+): D191, E195, E227, and E231. Substrate is bound at residue S252.

The protein belongs to the ketol-acid reductoisomerase family. Requires Mg(2+) as cofactor.

It carries out the reaction (2R)-2,3-dihydroxy-3-methylbutanoate + NADP(+) = (2S)-2-acetolactate + NADPH + H(+). The catalysed reaction is (2R,3R)-2,3-dihydroxy-3-methylpentanoate + NADP(+) = (S)-2-ethyl-2-hydroxy-3-oxobutanoate + NADPH + H(+). Its pathway is amino-acid biosynthesis; L-isoleucine biosynthesis; L-isoleucine from 2-oxobutanoate: step 2/4. The protein operates within amino-acid biosynthesis; L-valine biosynthesis; L-valine from pyruvate: step 2/4. In terms of biological role, involved in the biosynthesis of branched-chain amino acids (BCAA). Catalyzes an alkyl-migration followed by a ketol-acid reduction of (S)-2-acetolactate (S2AL) to yield (R)-2,3-dihydroxy-isovalerate. In the isomerase reaction, S2AL is rearranged via a Mg-dependent methyl migration to produce 3-hydroxy-3-methyl-2-ketobutyrate (HMKB). In the reductase reaction, this 2-ketoacid undergoes a metal-dependent reduction by NADPH to yield (R)-2,3-dihydroxy-isovalerate. This is Ketol-acid reductoisomerase (NADP(+)) from Streptococcus mutans serotype c (strain ATCC 700610 / UA159).